The primary structure comprises 739 residues: TonB-dependent heme receptor A (739 aa).

The N-terminal stretch at 1–22 (MKMKKQCATLTFFIGLHGYTIA) is a signal peptide. In terms of domain architecture, TBDR plug spans 38-150 (GHHERQPDRS…FAGTIKLETK (113 aa)). Residues 161 to 739 (LLGGLLKYGY…NIKLSISKQF (579 aa)) enclose the TBDR beta-barrel domain.

This sequence belongs to the TonB-dependent receptor family.

The protein localises to the cell outer membrane. Functionally, heme receptor. In Haemophilus ducreyi (strain 35000HP / ATCC 700724), this protein is TonB-dependent heme receptor A (tdhA).